Consider the following 1029-residue polypeptide: FYVE, RhoGEF and PH domain-containing protein tag-77 (1029 aa).

2 stretches are compositionally biased toward basic and acidic residues: residues 1–12 and 20–39; these read MKYDMNHRKNSD and TVKE…DNRF. Disordered stretches follow at residues 1–155, 185–254, and 279–370; these read MKYD…ATSE, VPRM…ERKT, and NNGV…EKDD. The segment covering 42 to 56 has biased composition (pro residues); it reads QPPPPPSPRRAPPPP. 2 stretches are compositionally biased toward low complexity: residues 76–85 and 122–133; these read PPSSSESSEN and SSSTSDVSSQNS. Polar residues-rich tracts occupy residues 141-155 and 200-211; these read SCTT…ATSE and PISQVSTLSQVS. The span at 212–227 shows a compositional bias: acidic residues; the sequence is DEFDEGDTSASDEESM. The segment covering 316–334 has biased composition (low complexity); sequence SPTSGMSSSSTDDFSRITS. Polar residues predominate over residues 335–347; sequence MTSDRSSILTSHS. Residues 375–572 enclose the DH domain; it reads KLHYAAVEFL…ENVTQAVNQK (198 aa). Residues 593–696 enclose the PH domain; it reads NVLEPGRVLI…WTDDLTKAQY (104 aa). Zn(2+)-binding residues include C810, C823, C826, C831, C834, C851, and C854. An FYVE-type; degenerate zinc finger spans residues 810-859; sequence CSTEFNIINRRHHCRDCGWLICKFCKGQAPLSKYDFTKQNVCSECFDRHY.

The protein resides in the cytoplasm. Its subcellular location is the cytoskeleton. Activates cdc-42, a member of the Ras-like family of Rho- and Rac proteins, by exchanging bound GDP for free GTP. May play a role in regulating the actin cytoskeleton and cell shape. Required for normal lifespan. This Caenorhabditis elegans protein is FYVE, RhoGEF and PH domain-containing protein tag-77.